Consider the following 518-residue polypeptide: Sensor protein kinase HptS (518 aa).

2 helical membrane passes run 20-40 (IFPVFLVIIIGLVSFYAIYIW) and 222-242 (GITLLIVMAVVLVLLVIFGFI). The region spanning 297–513 (EQLIHSIEHT…LICYKIPLSR (217 aa)) is the Histidine kinase domain. A Phosphohistidine; by autocatalysis modification is found at His-325.

Post-translationally, autophosphorylated.

The protein resides in the cell membrane. It carries out the reaction ATP + protein L-histidine = ADP + protein N-phospho-L-histidine.. In terms of biological role, member of the two-component regulatory system HptS/HptR that regulates genes involved in hexose phosphate transport system in response to changes in extracellular phosphate sources. May act as a sensor protein kinase which is autophosphorylated at a histidine residue and transfers its phosphate group to the conserved aspartic acid residue in the regulatory domain of HptS. In turn, HptS antagonizes CcpA-dependent transcription of a subset of CcpA-regulated genes involved in antibiotic susceptibility. The chain is Sensor protein kinase HptS (hptS) from Staphylococcus aureus (strain bovine RF122 / ET3-1).